Reading from the N-terminus, the 507-residue chain is Glycerol kinase (507 aa).

Thr-15 provides a ligand contact to ADP. ATP contacts are provided by Thr-15, Thr-16, and Ser-17. Thr-15 contacts sn-glycerol 3-phosphate. Arg-19 is a binding site for ADP. Residues Arg-85, Glu-86, Tyr-137, and Asp-250 each coordinate sn-glycerol 3-phosphate. The glycerol site is built by Arg-85, Glu-86, Tyr-137, Asp-250, and Gln-251. The ADP site is built by Thr-272 and Gly-316. Thr-272, Gly-316, Gln-320, and Gly-417 together coordinate ATP. Residue Gly-417 participates in ADP binding.

The protein belongs to the FGGY kinase family.

It catalyses the reaction glycerol + ATP = sn-glycerol 3-phosphate + ADP + H(+). It participates in polyol metabolism; glycerol degradation via glycerol kinase pathway; sn-glycerol 3-phosphate from glycerol: step 1/1. With respect to regulation, inhibited by fructose 1,6-bisphosphate (FBP). Its function is as follows. Key enzyme in the regulation of glycerol uptake and metabolism. Catalyzes the phosphorylation of glycerol to yield sn-glycerol 3-phosphate. This is Glycerol kinase from Mycoplasmopsis pulmonis (strain UAB CTIP) (Mycoplasma pulmonis).